The primary structure comprises 762 residues: 5-methyltetrahydropteroyltriglutamate--homocysteine methyltransferase (762 aa).

Residues 17-20 and Lys-111 contribute to the 5-methyltetrahydropteroyltri-L-glutamate site; that span reads REWK. Residues 435–437 and Glu-488 each bind L-homocysteine; that span reads IGS. L-methionine contacts are provided by residues 435 to 437 and Glu-488; that span reads IGS. 5-methyltetrahydropteroyltri-L-glutamate contacts are provided by residues 519–520 and Trp-565; that span reads RC. Asp-603 contributes to the L-homocysteine binding site. Position 603 (Asp-603) interacts with L-methionine. Residue Glu-609 coordinates 5-methyltetrahydropteroyltri-L-glutamate. Zn(2+) is bound by residues His-645, Cys-647, and Glu-669. The active-site Proton donor is His-698. Residue Cys-730 participates in Zn(2+) binding.

Belongs to the vitamin-B12 independent methionine synthase family. It depends on Zn(2+) as a cofactor.

It catalyses the reaction 5-methyltetrahydropteroyltri-L-glutamate + L-homocysteine = tetrahydropteroyltri-L-glutamate + L-methionine. Its pathway is amino-acid biosynthesis; L-methionine biosynthesis via de novo pathway; L-methionine from L-homocysteine (MetE route): step 1/1. Its function is as follows. Catalyzes the transfer of a methyl group from 5-methyltetrahydrofolate to homocysteine resulting in methionine formation. In Bacillus cereus (strain AH820), this protein is 5-methyltetrahydropteroyltriglutamate--homocysteine methyltransferase.